We begin with the raw amino-acid sequence, 347 residues long: Pre-B-cell leukemia transcription factor 1 (347 aa).

The interval 1–40 is disordered; it reads MDDQPRLMHSHPGVGMAGHPSLSQHMQDGTGANEGEGGRK. The PBC domain occupies 38–232; that stretch reads GRKQDIGDIL…VMILRSRFLD (195 aa). The PBC-A stretch occupies residues 45–124; it reads DILQQIMTIT…EGVAGPEKGG (80 aa). Positions 127–232 are PBC-B; that stretch reads AAAAAAAAAS…VMILRSRFLD (106 aa). The segment at residues 233–295 is a DNA-binding region (homeobox; TALE-type); the sequence is ARRKRRNFNK…NKRIRYKKNI (63 aa). A compositionally biased stretch (polar residues) spans 318-331; the sequence is VHGSQANSPSTPSS. The tract at residues 318–347 is disordered; sequence VHGSQANSPSTPSSAGGYPSPCYQSDRRIQ.

It belongs to the TALE/PBX homeobox family. Forms a heterodimer with meis1; the interaction is necessary for neural fate induction.

It is found in the nucleus. Its function is as follows. Acts as a transcriptional activator in complex with isoform 2 of meis1, to induce posterior neural and neural crest gene expression, and thereby specify hindbrain and neural crest cell fate. Binds to a highly conserved region in the promoter of the neural crest gene zic3. Required for the nuclear transport or retention of meis1. The chain is Pre-B-cell leukemia transcription factor 1 from Xenopus tropicalis (Western clawed frog).